A 336-amino-acid polypeptide reads, in one-letter code: Zinc transporter ZIP11 (336 aa).

The next 7 helical transmembrane spans lie at 12 to 32, 44 to 64, 75 to 95, 188 to 208, 258 to 278, 280 to 300, and 316 to 336; these read LLGTLLTWGLTAAGSALVFIF, LGFAAGVMLAASYWSLLAPAI, SFAFVPAAVGFLVGAGFVYLA, IMLLILAITIHNIPEGLAVGV, WYGQLSGMVEPIAGLLGTIAI, LAEPLLPYALAFAAGAMVYVV, and LASWTCIFGFIVMMSLDVGLG.

This sequence belongs to the ZIP transporter (TC 2.A.5) family.

It is found in the cell membrane. Its subcellular location is the nucleus. The protein resides in the cytoplasm. It localises to the golgi apparatus. Functions as a cellular zinc transporter. The polypeptide is Zinc transporter ZIP11 (slc39a11) (Xenopus tropicalis (Western clawed frog)).